Consider the following 68-residue polypeptide: Large ribosomal subunit protein bL33c (68 aa).

This sequence belongs to the bacterial ribosomal protein bL33 family.

Its subcellular location is the plastid. The protein resides in the chloroplast. The protein is Large ribosomal subunit protein bL33c of Pinus koraiensis (Korean pine).